Here is a 459-residue protein sequence, read N- to C-terminus: MMPFSVLQVKRLQLELITPAKPTLQETKFLSDIDDQEGLRFQVPVIMCYKDNPSLNKNCNPVKVIREALSRALVYYYPLAGRLKEGPNRKLMVDCNGEGILFVEASADVTLEQLGDKILPPCPLLEEFLFNFPGSDGIIGCPLLLVQVTCLTCGGFILALRVNHTMCDAPGLLLFLTAIAEMARGAHAPSILPVWERELLFSRDPPRITCVHHEYEDVIDHSDGSYASSNQSNMVQRSFYFGAKEMRVLRKQIPPHVISTCSTFDLITACLSKCRTLALKINPKQAVRVSCVVNARGKHHNVRLPLRYYGNAFAFPTAVSKAEPLCKNPLGYALELVKKAKATMNEEYLRSVADLLVLRGRPQYSSTGSYLIVSDNTRAGFGDVNFGWGQPVFAGPAKALDLISFYVQHKNNTEDGILVPMCLPSSAMERFQQELERITQEPKEDICNNLRSTRIMSMM.

Active-site proton acceptor residues include histidine 164 and asparagine 385.

It belongs to the plant acyltransferase family. As to expression, expressed at very low levels in the skin of ripe fruit.

Its function is as follows. Involved in the biosynthesis of volatile esters which confer ripe apple fruit flavor. Alcohol acyl transferase that can use a wide range of alcohols as substrate to produce esters. This Malus domestica (Apple) protein is Alcohol acyl transferase 1 allele RGc.